Reading from the N-terminus, the 361-residue chain is Probable U3 small nucleolar RNA-associated protein 11 (361 aa).

Disordered stretches follow at residues 1 to 52 (MTKG…KKRK), 200 to 235 (LMSGGHQIKSAAQKRKERREVQEKMRRSGADATPET), 262 to 295 (KRESEATASSSKGAPGDDGEQEEAAAQDEVTRLL), and 311 to 361 (RHVR…RRAR). Residues 17-33 (HLKRKTHLERSQPKSRQ) are compositionally biased toward basic residues. Basic and acidic residues-rich tracts occupy residues 37–46 (QLEKHKDHVL) and 217–228 (RREVQEKMRRSG). Residues 278 to 287 (DDGEQEEAAA) are compositionally biased toward acidic residues. The segment covering 342–352 (RQMEQRRESRF) has biased composition (basic and acidic residues).

This sequence belongs to the UTP11 family. As to quaternary structure, component of the ribosomal small subunit (SSU) processome.

The protein localises to the nucleus. Its subcellular location is the nucleolus. In terms of biological role, involved in nucleolar processing of pre-18S ribosomal RNA. The polypeptide is Probable U3 small nucleolar RNA-associated protein 11 (Leishmania major).